The primary structure comprises 455 residues: Bifunctional protein GlmU (455 aa).

The pyrophosphorylase stretch occupies residues 1 to 227 (MGLSVIILAA…CEEVQGVNDR (227 aa)). Residues 8 to 11 (LAAG), Lys-22, Gln-73, 78 to 79 (GT), 100 to 102 (YGD), Gly-137, Glu-152, Asn-167, and Asn-225 each bind UDP-N-acetyl-alpha-D-glucosamine. Residue Asp-102 coordinates Mg(2+). Asn-225 contributes to the Mg(2+) binding site. Positions 228 to 248 (WELTKLERYYQRLMAKKLSLA) are linker. The segment at 249–455 (GVTIIDPERF…KGWHRPTKKE (207 aa)) is N-acetyltransferase. UDP-N-acetyl-alpha-D-glucosamine contacts are provided by Arg-332 and Lys-350. His-362 acts as the Proton acceptor in catalysis. Residues Tyr-365 and Asn-376 each contribute to the UDP-N-acetyl-alpha-D-glucosamine site. Acetyl-CoA is bound by residues Ala-379, 385 to 386 (NY), Ser-404, Ala-422, and Arg-439.

This sequence in the N-terminal section; belongs to the N-acetylglucosamine-1-phosphate uridyltransferase family. In the C-terminal section; belongs to the transferase hexapeptide repeat family. Homotrimer. The cofactor is Mg(2+).

It is found in the cytoplasm. It catalyses the reaction alpha-D-glucosamine 1-phosphate + acetyl-CoA = N-acetyl-alpha-D-glucosamine 1-phosphate + CoA + H(+). The catalysed reaction is N-acetyl-alpha-D-glucosamine 1-phosphate + UTP + H(+) = UDP-N-acetyl-alpha-D-glucosamine + diphosphate. It participates in nucleotide-sugar biosynthesis; UDP-N-acetyl-alpha-D-glucosamine biosynthesis; N-acetyl-alpha-D-glucosamine 1-phosphate from alpha-D-glucosamine 6-phosphate (route II): step 2/2. Its pathway is nucleotide-sugar biosynthesis; UDP-N-acetyl-alpha-D-glucosamine biosynthesis; UDP-N-acetyl-alpha-D-glucosamine from N-acetyl-alpha-D-glucosamine 1-phosphate: step 1/1. It functions in the pathway bacterial outer membrane biogenesis; LPS lipid A biosynthesis. In terms of biological role, catalyzes the last two sequential reactions in the de novo biosynthetic pathway for UDP-N-acetylglucosamine (UDP-GlcNAc). The C-terminal domain catalyzes the transfer of acetyl group from acetyl coenzyme A to glucosamine-1-phosphate (GlcN-1-P) to produce N-acetylglucosamine-1-phosphate (GlcNAc-1-P), which is converted into UDP-GlcNAc by the transfer of uridine 5-monophosphate (from uridine 5-triphosphate), a reaction catalyzed by the N-terminal domain. In Coxiella burnetii (strain CbuK_Q154) (Coxiella burnetii (strain Q154)), this protein is Bifunctional protein GlmU.